The following is an 88-amino-acid chain: Beta-insect excitatory toxin LqhIT1a (88 aa).

The N-terminal stretch at M1–G18 is a signal peptide. The LCN-type CS-alpha/beta domain maps to K20–D83. 4 disulfides stabilise this stretch: C34-C55, C40-C60, C44-C62, and C56-C82.

Belongs to the long (4 C-C) scorpion toxin superfamily. Sodium channel inhibitor family. Beta subfamily. As to expression, expressed by the venom gland.

The protein resides in the secreted. Its function is as follows. Excitatory insect toxins induce a spastic paralysis. They bind voltage-independently at site-4 of sodium channels (Nav) and shift the voltage of activation toward more negative potentials thereby affecting sodium channel activation and promoting spontaneous and repetitive firing. In Leiurus hebraeus (Hebrew deathstalker scorpion), this protein is Beta-insect excitatory toxin LqhIT1a.